Consider the following 879-residue polypeptide: Alanine--tRNA ligase (879 aa).

The Zn(2+) site is built by histidine 566, histidine 570, cysteine 668, and histidine 672.

The protein belongs to the class-II aminoacyl-tRNA synthetase family. Zn(2+) is required as a cofactor.

The protein localises to the cytoplasm. It carries out the reaction tRNA(Ala) + L-alanine + ATP = L-alanyl-tRNA(Ala) + AMP + diphosphate. Functionally, catalyzes the attachment of alanine to tRNA(Ala) in a two-step reaction: alanine is first activated by ATP to form Ala-AMP and then transferred to the acceptor end of tRNA(Ala). Also edits incorrectly charged Ser-tRNA(Ala) and Gly-tRNA(Ala) via its editing domain. The sequence is that of Alanine--tRNA ligase from Clostridium novyi (strain NT).